The chain runs to 520 residues: Maturase K (520 aa).

Belongs to the intron maturase 2 family. MatK subfamily.

The protein resides in the plastid. Its subcellular location is the chloroplast. Usually encoded in the trnK tRNA gene intron. Probably assists in splicing its own and other chloroplast group II introns. The sequence is that of Maturase K from Iris cristata (Dwarf crested iris).